The primary structure comprises 413 residues: Tyrosine--tRNA ligase (413 aa).

The short motif at 59–68 (PTAPDIHIGH) is the 'HIGH' region element. Positions 243-247 (KMSKS) match the 'KMSKS' region motif. Lys-246 contributes to the ATP binding site. The S4 RNA-binding domain maps to 351–411 (LAIGQLLKQA…GKRRFARVTL (61 aa)).

The protein belongs to the class-I aminoacyl-tRNA synthetase family. TyrS type 2 subfamily. As to quaternary structure, homodimer.

The protein resides in the cytoplasm. It carries out the reaction tRNA(Tyr) + L-tyrosine + ATP = L-tyrosyl-tRNA(Tyr) + AMP + diphosphate + H(+). Catalyzes the attachment of tyrosine to tRNA(Tyr) in a two-step reaction: tyrosine is first activated by ATP to form Tyr-AMP and then transferred to the acceptor end of tRNA(Tyr). This Burkholderia lata (strain ATCC 17760 / DSM 23089 / LMG 22485 / NCIMB 9086 / R18194 / 383) protein is Tyrosine--tRNA ligase.